Consider the following 246-residue polypeptide: Phosphomannomutase 2 (246 aa).

Ala2 carries the N-acetylalanine modification. The active-site Nucleophile is Asp12. 2 residues coordinate Mg(2+): Asp12 and Asp14. The active-site Proton donor/acceptor is Asp14. Residues Arg21, Arg123, Arg134, and Arg141 each contribute to the alpha-D-mannose 1-phosphate site. Lys149 is subject to N6-acetyllysine. Alpha-D-mannose 1-phosphate is bound by residues Ser179 and Asp181. Residues Asp209, Phe221, Asp223, and Thr226 each coordinate Mg(2+).

The protein belongs to the eukaryotic PMM family. Homodimer.

Its subcellular location is the cytoplasm. The enzyme catalyses alpha-D-mannose 1-phosphate = D-mannose 6-phosphate. It participates in nucleotide-sugar biosynthesis; GDP-alpha-D-mannose biosynthesis; alpha-D-mannose 1-phosphate from D-fructose 6-phosphate: step 2/2. In terms of biological role, involved in the synthesis of the GDP-mannose and dolichol-phosphate-mannose required for a number of critical mannosyl transfer reactions. The polypeptide is Phosphomannomutase 2 (PMM2) (Homo sapiens (Human)).